We begin with the raw amino-acid sequence, 100 residues long: Urease subunit gamma (100 aa).

This sequence belongs to the urease gamma subunit family. In terms of assembly, heterotrimer of UreA (gamma), UreB (beta) and UreC (alpha) subunits. Three heterotrimers associate to form the active enzyme.

It localises to the cytoplasm. It catalyses the reaction urea + 2 H2O + H(+) = hydrogencarbonate + 2 NH4(+). Its pathway is nitrogen metabolism; urea degradation; CO(2) and NH(3) from urea (urease route): step 1/1. The chain is Urease subunit gamma from Alcanivorax borkumensis (strain ATCC 700651 / DSM 11573 / NCIMB 13689 / SK2).